Consider the following 507-residue polypeptide: Maturase K (507 aa).

It belongs to the intron maturase 2 family. MatK subfamily.

It is found in the plastid. It localises to the chloroplast. Usually encoded in the trnK tRNA gene intron. Probably assists in splicing its own and other chloroplast group II introns. This Ranunculus repens (Creeping buttercup) protein is Maturase K.